Reading from the N-terminus, the 351-residue chain is Anthranilate phosphoribosyltransferase (351 aa).

5-phospho-alpha-D-ribose 1-diphosphate contacts are provided by residues Gly90, 93–94, Thr98, 100–103, 118–126, and Ser130; these read GD, NIST, and KHGNRSASG. Gly90 is an anthranilate binding site. Ser102 contacts Mg(2+). Residue Asn121 coordinates anthranilate. Arg176 contributes to the anthranilate binding site. Asp235 and Glu236 together coordinate Mg(2+).

The protein belongs to the anthranilate phosphoribosyltransferase family. As to quaternary structure, homodimer. Mg(2+) serves as cofactor.

The enzyme catalyses N-(5-phospho-beta-D-ribosyl)anthranilate + diphosphate = 5-phospho-alpha-D-ribose 1-diphosphate + anthranilate. Its pathway is amino-acid biosynthesis; L-tryptophan biosynthesis; L-tryptophan from chorismate: step 2/5. In terms of biological role, catalyzes the transfer of the phosphoribosyl group of 5-phosphorylribose-1-pyrophosphate (PRPP) to anthranilate to yield N-(5'-phosphoribosyl)-anthranilate (PRA). This Prochlorococcus marinus (strain MIT 9313) protein is Anthranilate phosphoribosyltransferase.